The chain runs to 153 residues: Ribonuclease K6 (153 aa).

The first 27 residues, 1–27 (MVVDLPRYLPLLLLLELWEPMYLLCSQ), serve as a signal peptide directing secretion. H41 functions as the Proton acceptor in the catalytic mechanism. Disulfide bonds link C49–C107, C63–C117, C81–C132, and C88–C95. An N-linked (GlcNAc...) asparagine glycan is attached at N58. 64–68 (KQINT) provides a ligand contact to substrate. The N-linked (GlcNAc...) asparagine glycan is linked to N85. K89 provides a ligand contact to substrate. The active-site Proton donor is H148.

It belongs to the pancreatic ribonuclease family. Interacts (via N-terminus) with bacterial lipopolysaccharide (LPS). In terms of tissue distribution, highly expressed in spleen (at protein level). Has little or no expression in healthy kidneys (at protein level). Detected at high levels in infected kidneys (at protein level). Expressed at low levels in bladder. Also detected in skeletal muscle, heart and bone marrow.

It is found in the secreted. The protein localises to the lysosome. The protein resides in the cytoplasmic granule. Ribonuclease which shows a preference for the pyrimidines uridine and cytosine. Has potent antibacterial activity against a range of Gram-positive and Gram-negative bacteria, including P.aeruginosa, A.baumanii, M.luteus, S.aureus, E.faecalis, E.faecium, S.saprophyticus and E.coli. Causes loss of bacterial membrane integrity, and also promotes agglutination of Gram-negative bacteria. Probably contributes to urinary tract sterility. Bactericidal activity is independent of RNase activity. This Mus musculus (Mouse) protein is Ribonuclease K6 (Rnase6).